The primary structure comprises 603 residues: Thread biopolymer filament subunit gamma (603 aa).

The segment at 1 to 191 (MASHSSVSYR…ENETMEEELK (191 aa)) is head. The region spanning 158–476 (VKNILGTLNQ…KLLEGQELMV (319 aa)) is the IF rod domain. A coil 1A region spans residues 193 to 227 (LTGGVPMSPDSTVNLENVETQVTEMLTEVSNLTLE). A linker 1 region spans residues 228–240 (RVRLEIDVDHLRA). Residues 241–341 (TADEIKSKYE…DALNVMREEY (101 aa)) form a coil 1B region. The interval 342-362 (QQVVTKNVQEAETYCKMQIDQ) is linker 12. The interval 363 to 381 (IQGISTQTTEQISILDKEI) is coil 2A. Positions 382 to 389 (NTLEKELQ) are linker 2. The tract at residues 390 to 510 (PLNVEYQRLL…SSVGYGASST (121 aa)) is coil 2B. The interval 511-603 (TLGAISGGYS…GHDSTIILQQ (93 aa)) is tail. The span at 562–587 (SSSGGHSMYSSSSMKRSSSKSASASA) shows a compositional bias: low complexity. The interval 562-603 (SSSGGHSMYSSSSMKRSSSKSASASAGGYGTSGHDSTIILQQ) is disordered.

It belongs to the intermediate filament family. Coiled-coil heterodimer of an alpha and a gamma subunit. Assemble into 10 nm filaments. Forms a massive, conical, intermediate filament biopolymer of approximately 60 cm.

The protein localises to the secreted. It localises to the extracellular space. Functionally, released extracellularly into seawater and provides physical and biological defense against invasive organism by modulation of the viscoelastic properties of mucus. This is Thread biopolymer filament subunit gamma from Eptatretus stoutii (Pacific hagfish).